A 239-amino-acid chain; its full sequence is tRNA1(Val) (adenine(37)-N6)-methyltransferase (239 aa).

This sequence belongs to the methyltransferase superfamily. tRNA (adenine-N(6)-)-methyltransferase family.

The protein localises to the cytoplasm. It carries out the reaction adenosine(37) in tRNA1(Val) + S-adenosyl-L-methionine = N(6)-methyladenosine(37) in tRNA1(Val) + S-adenosyl-L-homocysteine + H(+). In terms of biological role, specifically methylates the adenine in position 37 of tRNA(1)(Val) (anticodon cmo5UAC). The chain is tRNA1(Val) (adenine(37)-N6)-methyltransferase from Vibrio parahaemolyticus serotype O3:K6 (strain RIMD 2210633).